A 557-amino-acid polypeptide reads, in one-letter code: Formate--tetrahydrofolate ligase 2 (557 aa).

66-73 provides a ligand contact to ATP; that stretch reads TPAGEGKT.

This sequence belongs to the formate--tetrahydrofolate ligase family.

It catalyses the reaction (6S)-5,6,7,8-tetrahydrofolate + formate + ATP = (6R)-10-formyltetrahydrofolate + ADP + phosphate. Its pathway is one-carbon metabolism; tetrahydrofolate interconversion. The polypeptide is Formate--tetrahydrofolate ligase 2 (Streptococcus pyogenes serotype M4 (strain MGAS10750)).